The primary structure comprises 101 residues: Small ribosomal subunit protein uS14 (101 aa).

The tract at residues 1 to 21 is disordered; the sequence is MAKTSAVEKNKRRRKSVAQQA.

The protein belongs to the universal ribosomal protein uS14 family. As to quaternary structure, part of the 30S ribosomal subunit. Contacts proteins S3 and S10.

In terms of biological role, binds 16S rRNA, required for the assembly of 30S particles and may also be responsible for determining the conformation of the 16S rRNA at the A site. The polypeptide is Small ribosomal subunit protein uS14 (Agrobacterium fabrum (strain C58 / ATCC 33970) (Agrobacterium tumefaciens (strain C58))).